An 83-amino-acid polypeptide reads, in one-letter code: Cytochrome b559 subunit alpha (83 aa).

The chain crosses the membrane as a helical span at residues 21 to 35 (VIHSITIPSLFIAGW). Residue His23 participates in heme binding.

It belongs to the PsbE/PsbF family. As to quaternary structure, heterodimer of an alpha subunit and a beta subunit. PSII is composed of 1 copy each of membrane proteins PsbA, PsbB, PsbC, PsbD, PsbE, PsbF, PsbH, PsbI, PsbJ, PsbK, PsbL, PsbM, PsbT, PsbX, PsbY, PsbZ, Psb30/Ycf12, at least 3 peripheral proteins of the oxygen-evolving complex and a large number of cofactors. It forms dimeric complexes. The cofactor is heme b.

It is found in the plastid. Its subcellular location is the chloroplast thylakoid membrane. Functionally, this b-type cytochrome is tightly associated with the reaction center of photosystem II (PSII). PSII is a light-driven water:plastoquinone oxidoreductase that uses light energy to abstract electrons from H(2)O, generating O(2) and a proton gradient subsequently used for ATP formation. It consists of a core antenna complex that captures photons, and an electron transfer chain that converts photonic excitation into a charge separation. The protein is Cytochrome b559 subunit alpha of Physcomitrium patens (Spreading-leaved earth moss).